A 414-amino-acid chain; its full sequence is Histidinol dehydrogenase (414 aa).

The NAD(+) site is built by Tyr-116, Gln-177, and Asn-200. Residues Thr-223, Gln-245, and His-248 each contribute to the substrate site. Residues Gln-245 and His-248 each coordinate Zn(2+). Active-site proton acceptor residues include Glu-313 and His-314. Substrate-binding residues include His-314, Asp-347, Glu-401, and His-406. Asp-347 contributes to the Zn(2+) binding site. Zn(2+) is bound at residue His-406.

This sequence belongs to the histidinol dehydrogenase family. The cofactor is Zn(2+).

The catalysed reaction is L-histidinol + 2 NAD(+) + H2O = L-histidine + 2 NADH + 3 H(+). It participates in amino-acid biosynthesis; L-histidine biosynthesis; L-histidine from 5-phospho-alpha-D-ribose 1-diphosphate: step 9/9. In terms of biological role, catalyzes the sequential NAD-dependent oxidations of L-histidinol to L-histidinaldehyde and then to L-histidine. The polypeptide is Histidinol dehydrogenase (Staphylococcus epidermidis (strain ATCC 35984 / DSM 28319 / BCRC 17069 / CCUG 31568 / BM 3577 / RP62A)).